The following is a 98-amino-acid chain: Plastocyanin (98 aa).

Residues 1–98 form the Plastocyanin-like domain; that stretch reads AQIVKLGGDD…AGMKMTITVQ (98 aa). Histidine 38, cysteine 83, histidine 86, and methionine 91 together coordinate Cu(2+).

The protein belongs to the plastocyanin family. Cu(2+) is required as a cofactor.

It is found in the plastid. It localises to the chloroplast thylakoid membrane. In terms of biological role, participates in electron transfer between P700 and the cytochrome b6-f complex in photosystem I. Has antiviral activity against Potato virus Y (strain N). In Ulva pertusa (Sea lettuce), this protein is Plastocyanin (PETE).